A 293-amino-acid polypeptide reads, in one-letter code: Proline iminopeptidase (293 aa).

The 250-residue stretch at 28–277 (KPLVLLHGGP…FSRHMPFVEE (250 aa)) folds into the AB hydrolase-1 domain. Ser-104 functions as the Nucleophile in the catalytic mechanism. Residue Asp-244 is part of the active site. The active-site Proton donor is His-271.

The protein belongs to the peptidase S33 family.

It catalyses the reaction Release of N-terminal proline from a peptide.. Its function is as follows. Releases the N-terminal proline from various substrates. The protein is Proline iminopeptidase of Clostridium botulinum (strain Hall / ATCC 3502 / NCTC 13319 / Type A).